The following is an 807-amino-acid chain: Glycerol-3-phosphate acyltransferase (807 aa).

Positions 308–313 match the HXXXXD motif motif; sequence CHRSHM.

It belongs to the GPAT/DAPAT family.

The protein localises to the cell inner membrane. It carries out the reaction sn-glycerol 3-phosphate + an acyl-CoA = a 1-acyl-sn-glycero-3-phosphate + CoA. Its pathway is phospholipid metabolism; CDP-diacylglycerol biosynthesis; CDP-diacylglycerol from sn-glycerol 3-phosphate: step 1/3. This Shewanella sp. (strain ANA-3) protein is Glycerol-3-phosphate acyltransferase.